The primary structure comprises 372 residues: Alanine dehydrogenase 2 (372 aa).

H95 is an active-site residue. NAD(+) is bound at residue K169–N199.

This sequence belongs to the AlaDH/PNT family.

It catalyses the reaction L-alanine + NAD(+) + H2O = pyruvate + NH4(+) + NADH + H(+). It functions in the pathway amino-acid degradation; L-alanine degradation via dehydrogenase pathway; NH(3) and pyruvate from L-alanine: step 1/1. In terms of biological role, may play a role in cell wall synthesis as L-alanine is an important constituent of the peptidoglycan layer. The sequence is that of Alanine dehydrogenase 2 (ald2) from Staphylococcus aureus (strain MRSA252).